The following is a 286-amino-acid chain: Large ribosomal subunit protein uL2 (286 aa).

Disordered stretches follow at residues Lys-22–His-59 and Leu-215–Lys-286. The segment covering Asp-230–Thr-240 has biased composition (basic and acidic residues). Residues Lys-255–Lys-286 are compositionally biased toward basic residues.

This sequence belongs to the universal ribosomal protein uL2 family. In terms of assembly, part of the 50S ribosomal subunit. Forms a bridge to the 30S subunit in the 70S ribosome.

One of the primary rRNA binding proteins. Required for association of the 30S and 50S subunits to form the 70S ribosome, for tRNA binding and peptide bond formation. It has been suggested to have peptidyltransferase activity; this is somewhat controversial. Makes several contacts with the 16S rRNA in the 70S ribosome. This Rhodopirellula baltica (strain DSM 10527 / NCIMB 13988 / SH1) protein is Large ribosomal subunit protein uL2.